A 122-amino-acid polypeptide reads, in one-letter code: Small ribosomal subunit protein uS13 (122 aa).

The interval 99-122 (RGQRTHTNARTRKGPAKAIAGKKK) is disordered.

The protein belongs to the universal ribosomal protein uS13 family. As to quaternary structure, part of the 30S ribosomal subunit. Forms a loose heterodimer with protein S19. Forms two bridges to the 50S subunit in the 70S ribosome.

Functionally, located at the top of the head of the 30S subunit, it contacts several helices of the 16S rRNA. In the 70S ribosome it contacts the 23S rRNA (bridge B1a) and protein L5 of the 50S subunit (bridge B1b), connecting the 2 subunits; these bridges are implicated in subunit movement. Contacts the tRNAs in the A and P-sites. The sequence is that of Small ribosomal subunit protein uS13 from Bradyrhizobium diazoefficiens (strain JCM 10833 / BCRC 13528 / IAM 13628 / NBRC 14792 / USDA 110).